The following is a 410-amino-acid chain: LL-diaminopimelate aminotransferase (410 aa).

Y15 and G42 together coordinate substrate. Pyridoxal 5'-phosphate contacts are provided by residues Y72, 108–109, Y132, N187, Y218, and 246–248; these read SK and SFS. Substrate-binding residues include K109, Y132, and N187. Position 249 is an N6-(pyridoxal phosphate)lysine (K249). 2 residues coordinate pyridoxal 5'-phosphate: R257 and N292. Residues N292 and R388 each coordinate substrate.

This sequence belongs to the class-I pyridoxal-phosphate-dependent aminotransferase family. LL-diaminopimelate aminotransferase subfamily. In terms of assembly, homodimer. Pyridoxal 5'-phosphate is required as a cofactor.

The catalysed reaction is (2S,6S)-2,6-diaminopimelate + 2-oxoglutarate = (S)-2,3,4,5-tetrahydrodipicolinate + L-glutamate + H2O + H(+). It participates in amino-acid biosynthesis; L-lysine biosynthesis via DAP pathway; LL-2,6-diaminopimelate from (S)-tetrahydrodipicolinate (aminotransferase route): step 1/1. Functionally, involved in the synthesis of meso-diaminopimelate (m-DAP or DL-DAP), required for both lysine and peptidoglycan biosynthesis. Catalyzes the direct conversion of tetrahydrodipicolinate to LL-diaminopimelate. The chain is LL-diaminopimelate aminotransferase from Geotalea uraniireducens (strain Rf4) (Geobacter uraniireducens).